The sequence spans 91 residues: uncharacterized protein (91 aa).

A signal peptide spans 1–18; it reads MKVNLILFSLFLLVSIMA. Cys19 is lipidated: N-palmitoyl cysteine. Cys19 carries the S-diacylglycerol cysteine lipid modification.

The protein resides in the cell membrane. This is an uncharacterized protein from Escherichia coli (strain K12).